The chain runs to 428 residues: GTPase Obg (428 aa).

Residues 1–158 enclose the Obg domain; the sequence is MFVDQVKIYV…RDVILELKVL (158 aa). In terms of domain architecture, OBG-type G spans 159 to 329; sequence ADVGLVGFPS…LLFEVANLIE (171 aa). GTP-binding positions include 165 to 172, 190 to 194, 212 to 215, 282 to 285, and 310 to 312; these read GFPSVGKS, FTTIV, DLPG, NKMD, and SAV. 2 residues coordinate Mg(2+): Ser172 and Thr192. One can recognise an OCT domain in the interval 350–428; that stretch reads KFETEGVKFD…ILEYEFEFID (79 aa).

Belongs to the TRAFAC class OBG-HflX-like GTPase superfamily. OBG GTPase family. Monomer. Mg(2+) serves as cofactor.

It localises to the cytoplasm. An essential GTPase which binds GTP, GDP and possibly (p)ppGpp with moderate affinity, with high nucleotide exchange rates and a fairly low GTP hydrolysis rate. Plays a role in control of the cell cycle, stress response, ribosome biogenesis and in those bacteria that undergo differentiation, in morphogenesis control. The protein is GTPase Obg of Bacillus cereus (strain AH820).